Consider the following 335-residue polypeptide: Anthranilate phosphoribosyltransferase 2 (335 aa).

5-phospho-alpha-D-ribose 1-diphosphate-binding positions include Gly-70, 73 to 74, Thr-78, 80 to 83, 98 to 106, and Ser-110; these read GD, NIST, and KHGNRSASS. Anthranilate is bound at residue Gly-70. Mg(2+) is bound at residue Ser-82. Anthranilate is bound at residue Asn-101. Position 156 (Arg-156) interacts with anthranilate. 2 residues coordinate Mg(2+): Asp-215 and Glu-216.

It belongs to the anthranilate phosphoribosyltransferase family. As to quaternary structure, homodimer. It depends on Mg(2+) as a cofactor.

It catalyses the reaction N-(5-phospho-beta-D-ribosyl)anthranilate + diphosphate = 5-phospho-alpha-D-ribose 1-diphosphate + anthranilate. It participates in amino-acid biosynthesis; L-tryptophan biosynthesis; L-tryptophan from chorismate: step 2/5. In terms of biological role, catalyzes the transfer of the phosphoribosyl group of 5-phosphorylribose-1-pyrophosphate (PRPP) to anthranilate to yield N-(5'-phosphoribosyl)-anthranilate (PRA). The protein is Anthranilate phosphoribosyltransferase 2 of Streptomyces coelicolor (strain ATCC BAA-471 / A3(2) / M145).